The following is a 324-amino-acid chain: Phospho-N-acetylmuramoyl-pentapeptide-transferase (324 aa).

The next 10 helical transmembrane spans lie at 5 to 25, 50 to 70, 77 to 97, 117 to 137, 147 to 167, 176 to 196, 203 to 223, 227 to 247, 250 to 270, and 304 to 324; these read VMVL…PLFI, GTPT…TLLM, LSVE…LGFL, LIGQ…SGFS, LSIN…VGGS, LDGL…VLAW, IAIF…FNAH, VFMG…VAIL, LEIL…SVII, and VTFW…EVWI.

This sequence belongs to the glycosyltransferase 4 family. MraY subfamily. Mg(2+) serves as cofactor.

It is found in the cell membrane. It carries out the reaction UDP-N-acetyl-alpha-D-muramoyl-L-alanyl-gamma-D-glutamyl-meso-2,6-diaminopimeloyl-D-alanyl-D-alanine + di-trans,octa-cis-undecaprenyl phosphate = di-trans,octa-cis-undecaprenyl diphospho-N-acetyl-alpha-D-muramoyl-L-alanyl-D-glutamyl-meso-2,6-diaminopimeloyl-D-alanyl-D-alanine + UMP. It functions in the pathway cell wall biogenesis; peptidoglycan biosynthesis. Functionally, catalyzes the initial step of the lipid cycle reactions in the biosynthesis of the cell wall peptidoglycan: transfers peptidoglycan precursor phospho-MurNAc-pentapeptide from UDP-MurNAc-pentapeptide onto the lipid carrier undecaprenyl phosphate, yielding undecaprenyl-pyrophosphoryl-MurNAc-pentapeptide, known as lipid I. This chain is Phospho-N-acetylmuramoyl-pentapeptide-transferase, found in Geobacillus sp. (strain WCH70).